A 225-amino-acid chain; its full sequence is Transmembrane protein 225 (225 aa).

The Cytoplasmic portion of the chain corresponds to 1–8 (MVHVSNRS). Residues 9-29 (IQGMNILFSSWAVVLMVMGIT) form a helical membrane-spanning segment. Residues 30 to 72 (LDKWVELISEDERAKMNHSPWMMCCPALWPEDDLKVVRIMMTS) lie on the Extracellular side of the membrane. A helical membrane pass occupies residues 73–93 (SLGLSFLLNLILGMKFTYLIP). The Cytoplasmic portion of the chain corresponds to 94–99 (QNKYIQ). A helical transmembrane segment spans residues 100–120 (LFTTILSFFSGISLLWALILY). The Extracellular segment spans residues 121–136 (HNKLKQGQSMHFSSYR). Residues 137–157 (ITWIMYTAYLNVFFLSVCGVL) traverse the membrane as a helical segment. The Cytoplasmic portion of the chain corresponds to 158–225 (SLLECKLSTS…VQTRHVTWAL (68 aa)). An RVxF motif is present at residues 219–223 (RHVTW).

In terms of assembly, interacts (via RVxF motif) with PPP1CC.

The protein resides in the cytoplasmic vesicle. Its subcellular location is the secretory vesicle. It localises to the acrosome membrane. Functionally, probably inhibits protein phosphatase 1 (PP1) in sperm via binding to catalytic subunit PPP1CC. The polypeptide is Transmembrane protein 225 (TMEM225) (Homo sapiens (Human)).